A 407-amino-acid chain; its full sequence is Probable tRNA sulfurtransferase (407 aa).

Positions Asn-61–Val-165 constitute a THUMP domain. ATP-binding positions include Met-183–Leu-184, His-208–Phe-209, Arg-265, Gly-287, and Gln-296.

The protein belongs to the ThiI family.

It localises to the cytoplasm. It catalyses the reaction [ThiI sulfur-carrier protein]-S-sulfanyl-L-cysteine + a uridine in tRNA + 2 reduced [2Fe-2S]-[ferredoxin] + ATP + H(+) = [ThiI sulfur-carrier protein]-L-cysteine + a 4-thiouridine in tRNA + 2 oxidized [2Fe-2S]-[ferredoxin] + AMP + diphosphate. The catalysed reaction is [ThiS sulfur-carrier protein]-C-terminal Gly-Gly-AMP + S-sulfanyl-L-cysteinyl-[cysteine desulfurase] + AH2 = [ThiS sulfur-carrier protein]-C-terminal-Gly-aminoethanethioate + L-cysteinyl-[cysteine desulfurase] + A + AMP + 2 H(+). Its pathway is cofactor biosynthesis; thiamine diphosphate biosynthesis. Its function is as follows. Catalyzes the ATP-dependent transfer of a sulfur to tRNA to produce 4-thiouridine in position 8 of tRNAs, which functions as a near-UV photosensor. Also catalyzes the transfer of sulfur to the sulfur carrier protein ThiS, forming ThiS-thiocarboxylate. This is a step in the synthesis of thiazole, in the thiamine biosynthesis pathway. The sulfur is donated as persulfide by IscS. The protein is Probable tRNA sulfurtransferase of Staphylococcus aureus (strain bovine RF122 / ET3-1).